Consider the following 249-residue polypeptide: 5'-nucleotidase SurE (249 aa).

4 residues coordinate a divalent metal cation: aspartate 8, aspartate 9, serine 39, and asparagine 91.

Belongs to the SurE nucleotidase family. Requires a divalent metal cation as cofactor.

The protein localises to the cytoplasm. It catalyses the reaction a ribonucleoside 5'-phosphate + H2O = a ribonucleoside + phosphate. In terms of biological role, nucleotidase that shows phosphatase activity on nucleoside 5'-monophosphates. The protein is 5'-nucleotidase SurE of Pseudomonas syringae pv. tomato (strain ATCC BAA-871 / DC3000).